We begin with the raw amino-acid sequence, 392 residues long: S-adenosylmethionine synthase (392 aa).

An ATP-binding site is contributed by histidine 17. Aspartate 19 lines the Mg(2+) pocket. Residue glutamate 45 participates in K(+) binding. L-methionine contacts are provided by glutamate 58 and glutamine 102. The flexible loop stretch occupies residues 102 to 112 (QSADIAQGVDA). Residues 169–171 (DAK), 235–236 (KF), aspartate 244, 250–251 (RK), alanine 267, and lysine 271 each bind ATP. Aspartate 244 is a binding site for L-methionine. An L-methionine-binding site is contributed by lysine 275.

Belongs to the AdoMet synthase family. Homotetramer; dimer of dimers. The cofactor is Mg(2+). It depends on K(+) as a cofactor.

The protein resides in the cytoplasm. It carries out the reaction L-methionine + ATP + H2O = S-adenosyl-L-methionine + phosphate + diphosphate. Its pathway is amino-acid biosynthesis; S-adenosyl-L-methionine biosynthesis; S-adenosyl-L-methionine from L-methionine: step 1/1. Catalyzes the formation of S-adenosylmethionine (AdoMet) from methionine and ATP. The overall synthetic reaction is composed of two sequential steps, AdoMet formation and the subsequent tripolyphosphate hydrolysis which occurs prior to release of AdoMet from the enzyme. This Methylobacterium radiotolerans (strain ATCC 27329 / DSM 1819 / JCM 2831 / NBRC 15690 / NCIMB 10815 / 0-1) protein is S-adenosylmethionine synthase.